The sequence spans 127 residues: MGFWKFSPFLVLGILALYQVGFLQAAPFRSALENPPDSGVRNEEELRLLLAAVMKDYMQMKTHELEQEQETEGSRVAVQKRSCNSATCVAHWLGGLLSRAGSVANTNLLPTSMGFKVYNRRRRELKA.

Residues Met1–Ala25 form the signal peptide. Positions Ala26–Gln79 are excised as a propeptide. An intrachain disulfide couples Cys83 to Cys88.

Belongs to the calcitonin family.

It is found in the secreted. Stimulates cAMP production in porcine kidney cell line LLC-PK1 via the calcitonin receptor (CT) but not via the CT-like (CL) receptor. The chain is Calcitonin receptor-stimulating peptide 1 (CRSP1) from Canis lupus familiaris (Dog).